The following is a 271-amino-acid chain: ATP synthase subunit delta (271 aa).

This sequence belongs to the ATPase delta chain family. In terms of assembly, F-type ATPases have 2 components, F(1) - the catalytic core - and F(0) - the membrane proton channel. F(1) has five subunits: alpha(3), beta(3), gamma(1), delta(1), epsilon(1). F(0) has three main subunits: a(1), b(2) and c(10-14). The alpha and beta chains form an alternating ring which encloses part of the gamma chain. F(1) is attached to F(0) by a central stalk formed by the gamma and epsilon chains, while a peripheral stalk is formed by the delta and b chains.

It is found in the cell membrane. Its function is as follows. F(1)F(0) ATP synthase produces ATP from ADP in the presence of a proton or sodium gradient. F-type ATPases consist of two structural domains, F(1) containing the extramembraneous catalytic core and F(0) containing the membrane proton channel, linked together by a central stalk and a peripheral stalk. During catalysis, ATP synthesis in the catalytic domain of F(1) is coupled via a rotary mechanism of the central stalk subunits to proton translocation. In terms of biological role, this protein is part of the stalk that links CF(0) to CF(1). It either transmits conformational changes from CF(0) to CF(1) or is implicated in proton conduction. The sequence is that of ATP synthase subunit delta from Streptomyces griseus subsp. griseus (strain JCM 4626 / CBS 651.72 / NBRC 13350 / KCC S-0626 / ISP 5235).